The sequence spans 204 residues: Ancillary SecYEG translocon subunit (204 aa).

Over 1–23 (MAYTIEEEQELTAIKAWWNENYK) the chain is Cytoplasmic. A helical transmembrane segment spans residues 24–44 (FIIVCFVIAFGGVFGWNYWQS). The Periplasmic segment spans residues 45 to 204 (HQIQKMHKAS…QLIQVRLNNL (160 aa)).

The protein belongs to the YfgM family. In terms of assembly, interacts with the SecYEG translocon. Forms a complex with PpiD.

Its subcellular location is the cell inner membrane. Its function is as follows. May mediate protein transfer from the SecYEG translocon to the periplasmic chaperone network via its periplasmic C-terminal region. The chain is Ancillary SecYEG translocon subunit (1057) from Aggregatibacter actinomycetemcomitans (Actinobacillus actinomycetemcomitans).